A 421-amino-acid polypeptide reads, in one-letter code: 26S proteasome non-ATPase regulatory subunit 11A (421 aa).

The PCI domain maps to 227–391; that stretch reads AYSYFYEAFE…GVLIVFDEPP (165 aa).

It belongs to the proteasome subunit S9 family. In terms of assembly, component of the lid subcomplex of the 19S proteasome regulatory particle complex (also named PA700 complex). The 26S proteasome consists of a 20S proteasome core and two 19S regulatory subunits.

Its subcellular location is the nucleus. The protein localises to the cytoplasm. It localises to the cytosol. Component of the lid subcomplex of the 26S proteasome, a multiprotein complex involved in the ATP-dependent degradation of ubiquitinated proteins. In the complex, psmd11a is required for proteasome assembly. In Danio rerio (Zebrafish), this protein is 26S proteasome non-ATPase regulatory subunit 11A (psmd11a).